We begin with the raw amino-acid sequence, 286 residues long: CDP-diacylglycerol--serine O-phosphatidyltransferase (286 aa).

6 helical membrane passes run 15-35, 74-94, 95-115, 135-155, 167-187, and 207-227; these read ILPS…IKFA, IDSL…LYVS, MLSK…CVVL, EFFV…LLAL, GWFL…GIPM, and LAIC…VIII.

Belongs to the CDP-alcohol phosphatidyltransferase class-I family.

It localises to the cell membrane. It catalyses the reaction a CDP-1,2-diacyl-sn-glycerol + L-serine = a 1,2-diacyl-sn-glycero-3-phospho-L-serine + CMP + H(+). This chain is CDP-diacylglycerol--serine O-phosphatidyltransferase (pssA), found in Mycobacterium tuberculosis (strain ATCC 25618 / H37Rv).